The primary structure comprises 520 residues: 2-isopropylmalate synthase (520 aa).

Residues 12–274 (VVIFDTTLRD…DTGIDTTMLT (263 aa)) enclose the Pyruvate carboxyltransferase domain. Residues Asp21, His209, His211, and Asn245 each coordinate Mn(2+). The regulatory domain stretch occupies residues 398–520 (KLLSLSVIAG…RLHAQHAAVV (123 aa)).

The protein belongs to the alpha-IPM synthase/homocitrate synthase family. LeuA type 1 subfamily. In terms of assembly, homodimer. Mn(2+) is required as a cofactor.

The protein resides in the cytoplasm. The catalysed reaction is 3-methyl-2-oxobutanoate + acetyl-CoA + H2O = (2S)-2-isopropylmalate + CoA + H(+). It participates in amino-acid biosynthesis; L-leucine biosynthesis; L-leucine from 3-methyl-2-oxobutanoate: step 1/4. Catalyzes the condensation of the acetyl group of acetyl-CoA with 3-methyl-2-oxobutanoate (2-ketoisovalerate) to form 3-carboxy-3-hydroxy-4-methylpentanoate (2-isopropylmalate). The protein is 2-isopropylmalate synthase of Methylorubrum populi (strain ATCC BAA-705 / NCIMB 13946 / BJ001) (Methylobacterium populi).